Consider the following 226-residue polypeptide: Low-molecular weight cobalt-containing nitrile hydratase subunit beta (226 aa).

Residues 1-22 are disordered; that stretch reads MDGIHDLGGRAGLGPIKPESDE.

Belongs to the nitrile hydratase subunit beta family. Heterodimer of an alpha and a beta chain.

It carries out the reaction an aliphatic primary amide = an aliphatic nitrile + H2O. NHase catalyzes the hydration of various nitrile compounds to the corresponding amides. This Rhodococcus rhodochrous protein is Low-molecular weight cobalt-containing nitrile hydratase subunit beta.